A 53-amino-acid polypeptide reads, in one-letter code: IgA-inducing protein homolog (53 aa).

The first 30 residues, 1 to 30 (MCSYYHMKKRSVSGCNITIFAVMFSHLSAG), serve as a signal peptide directing secretion.

It localises to the secreted. Its function is as follows. Enhances IgA secretion from B-cells stimulated via CD40. This is IgA-inducing protein homolog (IGIP) from Homo sapiens (Human).